Reading from the N-terminus, the 341-residue chain is UDP-3-O-acylglucosamine N-acyltransferase 2 (341 aa).

The active-site Proton acceptor is histidine 254.

The protein belongs to the transferase hexapeptide repeat family. LpxD subfamily. As to quaternary structure, homotrimer.

The catalysed reaction is a UDP-3-O-[(3R)-3-hydroxyacyl]-alpha-D-glucosamine + a (3R)-hydroxyacyl-[ACP] = a UDP-2-N,3-O-bis[(3R)-3-hydroxyacyl]-alpha-D-glucosamine + holo-[ACP] + H(+). It participates in bacterial outer membrane biogenesis; LPS lipid A biosynthesis. In terms of biological role, catalyzes the N-acylation of UDP-3-O-acylglucosamine using 3-hydroxyacyl-ACP as the acyl donor. Is involved in the biosynthesis of lipid A, a phosphorylated glycolipid that anchors the lipopolysaccharide to the outer membrane of the cell. The protein is UDP-3-O-acylglucosamine N-acyltransferase 2 of Nitrobacter winogradskyi (strain ATCC 25391 / DSM 10237 / CIP 104748 / NCIMB 11846 / Nb-255).